We begin with the raw amino-acid sequence, 240 residues long: MSSPAPSGTQVQPGSLRPCPGAVSPVVPRRLARGRLESSFSVEAILARPKTRELAATSLPLSTCTSLNLLGAVSQYGVLPWVCSTGSWLPAYLSVGVYPLCSMSCVPGLNVTHHQQGLRLTGSELPYCLGPLKWAPTVDLRDHGTERHTKRVRTTFNLQQLQELEKVFAKQHNLVGKERAQLAARLHLTENQVRIWFQNRRVKYQKQQKLKLPSSSVMEEPSSSSDGNIQSEDAELGIGS.

The span at 1–13 (MSSPAPSGTQVQP) shows a compositional bias: polar residues. Disordered stretches follow at residues 1-21 (MSSPAPSGTQVQPGSLRPCPG) and 208-240 (QKLKLPSSSVMEEPSSSSDGNIQSEDAELGIGS). Residues 149-208 (TKRVRTTFNLQQLQELEKVFAKQHNLVGKERAQLAARLHLTENQVRIWFQNRRVKYQKQQ) constitute a DNA-binding region (homeobox). Positions 213-225 (PSSSVMEEPSSSS) are enriched in low complexity.

It localises to the nucleus. Transcription factor that controls node morphogenesis. Acts downstream of both FOXA2 and Brachyury (T) during notochord development. Is essential for cilia formation in the posterior notochord (PNC) and for left-right patterning; acts upstream of FOXJ1 and RFX3 in this process and is required for the expression of various components important for axonemal assembly and function. Plays a role in regulating axial versus paraxial cell fate. Activates the transcription of ciliary proteins C11orf97 homolog, FAM183B and SPACA9 in the embryonic ventral node. In Mus musculus (Mouse), this protein is Homeobox protein notochord (Noto).